The following is a 353-amino-acid chain: Nicotinate-nucleotide--dimethylbenzimidazole phosphoribosyltransferase (353 aa).

Catalysis depends on glutamate 319, which acts as the Proton acceptor.

Belongs to the CobT family.

It carries out the reaction 5,6-dimethylbenzimidazole + nicotinate beta-D-ribonucleotide = alpha-ribazole 5'-phosphate + nicotinate + H(+). It participates in nucleoside biosynthesis; alpha-ribazole biosynthesis; alpha-ribazole from 5,6-dimethylbenzimidazole: step 1/2. In terms of biological role, catalyzes the synthesis of alpha-ribazole-5'-phosphate from nicotinate mononucleotide (NAMN) and 5,6-dimethylbenzimidazole (DMB). This chain is Nicotinate-nucleotide--dimethylbenzimidazole phosphoribosyltransferase, found in Syntrophobacter fumaroxidans (strain DSM 10017 / MPOB).